The chain runs to 187 residues: Small ribosomal subunit protein uS10m (187 aa).

Belongs to the universal ribosomal protein uS10 family. As to quaternary structure, component of the mitochondrial ribosome small subunit (28S) which comprises a 12S rRNA and about 30 distinct proteins.

It localises to the mitochondrion. This chain is Small ribosomal subunit protein uS10m (mrps10), found in Danio rerio (Zebrafish).